We begin with the raw amino-acid sequence, 275 residues long: NADH-quinone oxidoreductase subunit E 1 (275 aa).

[2Fe-2S] cluster is bound by residues Cys-99, Cys-104, Cys-140, and Cys-144. A disordered region spans residues 200-275 (LQAPEPVEEK…DKSKPAKKPR (76 aa)). Basic and acidic residues predominate over residues 206–221 (VEEKKSVRASKAKDEQ). Polar residues predominate over residues 231–242 (AKPSTATDVTNP). The span at 243 to 256 (TLKTPATARKAAAK) shows a compositional bias: low complexity. A compositionally biased stretch (basic and acidic residues) spans 258–269 (VKIEGETVDKSK).

The protein belongs to the complex I 24 kDa subunit family. [2Fe-2S] cluster serves as cofactor.

The catalysed reaction is a quinone + NADH + 5 H(+)(in) = a quinol + NAD(+) + 4 H(+)(out). NDH-1 shuttles electrons from NADH, via FMN and iron-sulfur (Fe-S) centers, to quinones in the respiratory chain. The immediate electron acceptor for the enzyme in this species is believed to be ubiquinone. Couples the redox reaction to proton translocation (for every two electrons transferred, four hydrogen ions are translocated across the cytoplasmic membrane), and thus conserves the redox energy in a proton gradient. The chain is NADH-quinone oxidoreductase subunit E 1 (nuoE1) from Rhizobium meliloti (strain 1021) (Ensifer meliloti).